The following is a 211-amino-acid chain: Large ribosomal subunit protein uL3 (211 aa).

Q150 carries the N5-methylglutamine modification.

It belongs to the universal ribosomal protein uL3 family. Part of the 50S ribosomal subunit. Forms a cluster with proteins L14 and L19. Post-translationally, methylated by PrmB.

Functionally, one of the primary rRNA binding proteins, it binds directly near the 3'-end of the 23S rRNA, where it nucleates assembly of the 50S subunit. This chain is Large ribosomal subunit protein uL3, found in Pseudomonas putida (strain GB-1).